The following is a 90-amino-acid chain: MSRTVFCVRLNKEADGLDFQLYPGELGKRIFDNISKEAWGQWQHKQTMLINEKKLNMMDPEHRKLLETEMEGFLFDGKDVVIDGYTPPSE.

Belongs to the Fe(2+)-trafficking protein family.

Its function is as follows. Could be a mediator in iron transactions between iron acquisition and iron-requiring processes, such as synthesis and/or repair of Fe-S clusters in biosynthetic enzymes. This is Probable Fe(2+)-trafficking protein from Aliivibrio fischeri (strain ATCC 700601 / ES114) (Vibrio fischeri).